We begin with the raw amino-acid sequence, 71 residues long: U3-scytotoxin-Sth1h (71 aa).

Positions 1–33 (MSQNSITSYKMGFAKHFFLFAVLLCATAMYSVA) are cleaved as a signal peptide. Residues 34–39 (EPAQER) constitute a propeptide that is removed on maturation. 3 cysteine pairs are disulfide-bonded: C46/C60, C53/C64, and C59/C69.

Expressed by the venom gland.

Its subcellular location is the secreted. In terms of biological role, probable insect neurotoxin with ion channel impairing activity. Does not show activity on 45 human receptors from 9 families (5-hydroxytryptamine, adrenergic, dopamine, muscarinic, histamine, neurotransmitter, opioid, sigma, and gaba(A) receptors). In vivo, when mixed with U3-SYTX-Sth1a does not cause paralytic or lethal activity when injected into crickets. It is noteworthy that crickets are evolutionarily distant from prey species. This is U3-scytotoxin-Sth1h from Scytodes thoracica (Spitting spider).